Here is an 88-residue protein sequence, read N- to C-terminus: Small ribosomal subunit protein uS15 (88 aa).

The protein belongs to the universal ribosomal protein uS15 family. As to quaternary structure, part of the 30S ribosomal subunit. Forms a bridge to the 50S subunit in the 70S ribosome, contacting the 23S rRNA.

In terms of biological role, one of the primary rRNA binding proteins, it binds directly to 16S rRNA where it helps nucleate assembly of the platform of the 30S subunit by binding and bridging several RNA helices of the 16S rRNA. Functionally, forms an intersubunit bridge (bridge B4) with the 23S rRNA of the 50S subunit in the ribosome. The polypeptide is Small ribosomal subunit protein uS15 (Mycoplasmopsis agalactiae (strain NCTC 10123 / CIP 59.7 / PG2) (Mycoplasma agalactiae)).